An 873-amino-acid polypeptide reads, in one-letter code: Alanine--tRNA ligase (873 aa).

Zn(2+)-binding residues include His562, His566, Cys666, and His670.

Belongs to the class-II aminoacyl-tRNA synthetase family. It depends on Zn(2+) as a cofactor.

It localises to the cytoplasm. It catalyses the reaction tRNA(Ala) + L-alanine + ATP = L-alanyl-tRNA(Ala) + AMP + diphosphate. Functionally, catalyzes the attachment of alanine to tRNA(Ala) in a two-step reaction: alanine is first activated by ATP to form Ala-AMP and then transferred to the acceptor end of tRNA(Ala). Also edits incorrectly charged Ser-tRNA(Ala) and Gly-tRNA(Ala) via its editing domain. The protein is Alanine--tRNA ligase of Dichelobacter nodosus (strain VCS1703A).